The following is a 146-amino-acid chain: Large ribosomal subunit protein uL16 (146 aa).

It belongs to the universal ribosomal protein uL16 family. As to quaternary structure, part of the 50S ribosomal subunit.

In terms of biological role, binds 23S rRNA and is also seen to make contacts with the A and possibly P site tRNAs. The polypeptide is Large ribosomal subunit protein uL16 (Lactobacillus acidophilus (strain ATCC 700396 / NCK56 / N2 / NCFM)).